Consider the following 325-residue polypeptide: Beta-ketoacyl-[acyl-carrier-protein] synthase III (325 aa).

Active-site residues include Cys-119 and His-252. The ACP-binding stretch occupies residues 253-257 (QANIR). Residue Asn-282 is part of the active site.

This sequence belongs to the thiolase-like superfamily. FabH family. Homodimer.

Its subcellular location is the cytoplasm. It carries out the reaction malonyl-[ACP] + acetyl-CoA + H(+) = 3-oxobutanoyl-[ACP] + CO2 + CoA. It functions in the pathway lipid metabolism; fatty acid biosynthesis. Functionally, catalyzes the condensation reaction of fatty acid synthesis by the addition to an acyl acceptor of two carbons from malonyl-ACP. Catalyzes the first condensation reaction which initiates fatty acid synthesis and may therefore play a role in governing the total rate of fatty acid production. Possesses both acetoacetyl-ACP synthase and acetyl transacylase activities. Its substrate specificity determines the biosynthesis of branched-chain and/or straight-chain of fatty acids. The protein is Beta-ketoacyl-[acyl-carrier-protein] synthase III of Delftia acidovorans (strain DSM 14801 / SPH-1).